The primary structure comprises 1388 residues: CRISPR-associated endonuclease Cas9 2 (1388 aa).

Residue Asp10 is the For RuvC-like nuclease domain of the active site. Mg(2+)-binding residues include Asp10, Glu763, and Glu767. Positions 771-928 (TNQGKSNSQQ…DKAGFIQRQL (158 aa)) constitute an HNH Cas9-type domain. His847 (proton acceptor for HNH nuclease domain) is an active-site residue. A Mg(2+)-binding site is contributed by His990. Over residues 1100-1109 (EQNHGLDRGK) the composition is skewed to basic and acidic residues. Residues 1100-1130 (EQNHGLDRGKPKGLFNANLSSKPKPNSNENL) are disordered. Residues 1102–1388 (NHGLDRGKPK…RIDLAKLGEG (287 aa)) form a PAM-interacting domain (PI) region. Polar residues predominate over residues 1116 to 1129 (ANLSSKPKPNSNEN).

This sequence belongs to the CRISPR-associated protein Cas9 family. Subtype II-A subfamily. In terms of assembly, monomer. Binds crRNA and tracrRNA. Mg(2+) is required as a cofactor.

Functionally, CRISPR (clustered regularly interspaced short palindromic repeat) is an adaptive immune system that provides protection against mobile genetic elements (viruses, transposable elements and conjugative plasmids). CRISPR clusters contain spacers, sequences complementary to antecedent mobile elements, and target invading nucleic acids. CRISPR clusters are transcribed and processed into CRISPR RNA (crRNA). In type II CRISPR systems correct processing of pre-crRNA requires a trans-encoded small RNA (tracrRNA), endogenous ribonuclease 3 (rnc) and this protein. The tracrRNA serves as a guide for ribonuclease 3-aided processing of pre-crRNA. Subsequently Cas9/crRNA/tracrRNA endonucleolytically cleaves linear or circular dsDNA target complementary to the spacer yielding blunt ends; Cas9 is inactive in the absence of the 2 guide RNAs (gRNA). Cas9 recognizes a 3'-G-rich protospacer adjacent motif (PAM, GGG in this organism) in the CRISPR repeat sequences to help distinguish self versus nonself, as targets within the bacterial CRISPR locus do not have PAMs. PAM recognition is also required for catalytic activity. Complements the gRNA coprocessing defect in a cas9 deletion in S.pyogenes strain 370, and cuts target DNA in Cas9:gRNAs mixing experiments with S.mutans strain UA159. The protein is CRISPR-associated endonuclease Cas9 2 of Streptococcus thermophilus (strain ATCC BAA-491 / LMD-9).